We begin with the raw amino-acid sequence, 198 residues long: Putative transposase InsO for insertion sequence element IS911B (198 aa).

The Integrase catalytic domain maps to A105–V198.

Functionally, involved in the transposition of the insertion sequence IS911B. The chain is Putative transposase InsO for insertion sequence element IS911B (insO2) from Escherichia coli (strain K12).